The following is a 219-amino-acid chain: Oligoribonuclease (219 aa).

Positions 30-193 constitute an Exonuclease domain; sequence LVWLDMEMTG…ADIVESIEEL (164 aa). The active site involves tyrosine 151.

This sequence belongs to the oligoribonuclease family.

Its subcellular location is the cytoplasm. Its function is as follows. 3'-to-5' exoribonuclease specific for small oligoribonucleotides. The protein is Oligoribonuclease of Ralstonia nicotianae (strain ATCC BAA-1114 / GMI1000) (Ralstonia solanacearum).